The chain runs to 99 residues: MPTQLEMAMDTMIRIFHRYSGKERKRFKLSKGELKLLLQRELTEFLSCQKETQLVDKIVQDLDANKDNEVDFNEFVVMVAALTVACNDYFVEQLKKKGK.

EF-hand domains are found at residues 13 to 48 (IRIF…FLSC) and 50 to 85 (KETQ…LTVA). Ca(2+)-binding residues include S20, E23, K28, E33, D63, N65, D67, E69, and E74.

This sequence belongs to the S-100 family. In terms of assembly, homodimer. Interacts with S100P. As to expression, highest level of expression in spleen and leukocytes.

The protein is Protein S100-Z of Homo sapiens (Human).